A 118-amino-acid chain; its full sequence is Small ribosomal subunit protein uS13 (118 aa).

The disordered stretch occupies residues Arg-92–Lys-118.

The protein belongs to the universal ribosomal protein uS13 family. Part of the 30S ribosomal subunit. Forms a loose heterodimer with protein S19. Forms two bridges to the 50S subunit in the 70S ribosome.

Functionally, located at the top of the head of the 30S subunit, it contacts several helices of the 16S rRNA. In the 70S ribosome it contacts the 23S rRNA (bridge B1a) and protein L5 of the 50S subunit (bridge B1b), connecting the 2 subunits; these bridges are implicated in subunit movement. Contacts the tRNAs in the A and P-sites. This is Small ribosomal subunit protein uS13 from Yersinia pestis.